We begin with the raw amino-acid sequence, 196 residues long: Cupin-domain-containing oxidoreductase srdB (196 aa).

The Cupin type-2 domain maps to 92–156 (DFAPGCKSNM…TSDEKPARML (65 aa)).

The protein belongs to the virC family.

Its function is as follows. Cupin-domain-containing oxidoreductase; part of the gene cluster that mediates the biosynthesis of sordarial, a salicylic aldehyde structurally related to the phytotoxin pyriculol. The most interesting aspect of this pathway is formation of an aromatic product from the highly reducing polyketide synthase srdA. SrdA synthesizes a reduced polyketide chain from one molecule of acetyl-CoA and five molecules of malonyl-CoA. The polyketide chain is then reductively released as an aldehyde. The oxidoreductases srdC, srdD and srdE then oxidize one of the hydroxy groups to facilitate the intramolecular aldol condensation, followed by dehydration to yield a salicylic aldehyde. This aldehyde can undergo facile reduction by endogenous reductases to yield the alcohol 1-hydroxy-2-hydroxymethyl-3-pent-1,3-dienylbenzene. The flavin-dependent srdI counteract against the propensity of the aldehydes to be reduced under physiological conditions and is responsible for reoxidizing 1-hydroxy-2-hydroxymethyl-3-pent-1,3-dienylbenzene back to the salicylic aldehyde. This salicylic aldehyde is then selectively epoxidized by the cupin-domain-containing oxidoreductase srdB to yield the epoxide, which can be hydrolyzed stereoselectively by the hydrolase srdG to give the final product sordarial. This is Cupin-domain-containing oxidoreductase srdB from Neurospora crassa (strain ATCC 24698 / 74-OR23-1A / CBS 708.71 / DSM 1257 / FGSC 987).